The following is a 467-amino-acid chain: Microtubule-associated tyrosine carboxypeptidase 1 (467 aa).

A compositionally biased stretch (polar residues) spans 1–10; the sequence is MVLDSGTQVY. 2 disordered regions span residues 1 to 40 and 77 to 111; these read MVLD…PLYP and MRRS…TLRP. His-276 lines the Zn(2+) pocket. The active-site Nucleophile is the Glu-277. Zn(2+) is bound by residues His-281 and Glu-312.

This sequence belongs to the peptidase MATCAP family. Zn(2+) serves as cofactor.

The protein resides in the cytoplasm. It is found in the cytoskeleton. It catalyses the reaction C-terminal L-alpha-aminoacyl-L-glutamyl-L-glutamyl-L-tyrosyl-[tubulin] + H2O = C-terminal L-alpha-aminoacyl-L-glutamyl-L-glutamyl-[tubulin] + L-tyrosine. The catalysed reaction is C-terminal L-alpha-aminoacyl-L-glutamyl-L-glutamyl-L-phenylalanyl-[tubulin] + H2O = C-terminal L-alpha-aminoacyl-L-glutamyl-L-glutamyl-[tubulin] + L-phenylalanine. Tyrosine carboxypeptidase that removes the C-terminal tyrosine residue of alpha-tubulin, thereby regulating microtubule dynamics and function. Also able to remove the C-terminal phenylalanine residue of alpha-tubulin TUBA8. Recognizes adjacent tubulin dimers along the same protofilament. The polypeptide is Microtubule-associated tyrosine carboxypeptidase 1 (Mus musculus (Mouse)).